The primary structure comprises 205 residues: Proteasome subunit beta type-3 (205 aa).

An N-acetylserine modification is found at serine 2. Lysine 77 is modified (N6-acetyllysine).

Belongs to the peptidase T1B family. The 26S proteasome consists of a 20S proteasome core and two 19S regulatory subunits. The 20S proteasome core is a barrel-shaped complex made of 28 subunits that are arranged in four stacked rings. The two outer rings are each formed by seven alpha subunits, and the two inner rings are formed by seven beta subunits. The proteolytic activity is exerted by three beta-subunits PSMB5, PSMB6 and PSMB7. In terms of assembly, (Microbial infection) Interacts with HIV-1 TAT protein.

The protein resides in the cytoplasm. Its subcellular location is the nucleus. Functionally, non-catalytic component of the 20S core proteasome complex involved in the proteolytic degradation of most intracellular proteins. This complex plays numerous essential roles within the cell by associating with different regulatory particles. Associated with two 19S regulatory particles, forms the 26S proteasome and thus participates in the ATP-dependent degradation of ubiquitinated proteins. The 26S proteasome plays a key role in the maintenance of protein homeostasis by removing misfolded or damaged proteins that could impair cellular functions, and by removing proteins whose functions are no longer required. Associated with the PA200 or PA28, the 20S proteasome mediates ubiquitin-independent protein degradation. This type of proteolysis is required in several pathways including spermatogenesis (20S-PA200 complex) or generation of a subset of MHC class I-presented antigenic peptides (20S-PA28 complex). The chain is Proteasome subunit beta type-3 from Homo sapiens (Human).